Reading from the N-terminus, the 430-residue chain is MAAIVIVGAQWGDEGKGKATDILGGKVDYVVKPNGGNNAGHTVVVGGEKYELKLLPAGILSENATPVLGNGVVINLEALFDEIDGLEARGANASRLKISANAHLVAPYHQTLDRVQERFLGKRAIGTTGRGIGPAYADKVARIGIRVQDIFDESILRQKVESALDIKNQMLVKMYNRKAIEPEQVVEYFLSYRDRLRPMVIEAELELNQALDEGKHVLMEGGQATMLDVDHGTYPFVTSSNPTAGGAAVGSGIGPTRITTSLGIIKAYTTRVGAGPFPTELFDKWGEYLQTTGGEIGVNTGRKRRCGWYDSVIARYATRVNGFTDYFLTKLDVLTGIGEIPICVAYDVDGKRYDEMPLTQSEFHHAEPIFETMPAWDEDITGCQTFEELPQKAQDYVLRLEELSGCRISYIGVGPGRDQTIVRHDVMQDQ.

GTP is bound by residues 12–18 (GDEGKGK) and 40–42 (GHT). Asp13 acts as the Proton acceptor in catalysis. Mg(2+) is bound by residues Asp13 and Gly40. IMP-binding positions include 13–16 (DEGK), 38–41 (NAGH), Thr128, Arg142, Gln223, Thr238, and Arg302. His41 functions as the Proton donor in the catalytic mechanism. Residue 298 to 304 (VNTGRKR) participates in substrate binding. GTP-binding positions include Arg304, 330–332 (KLD), and 412–414 (GVG).

It belongs to the adenylosuccinate synthetase family. Homodimer. Mg(2+) is required as a cofactor.

The protein resides in the cytoplasm. It catalyses the reaction IMP + L-aspartate + GTP = N(6)-(1,2-dicarboxyethyl)-AMP + GDP + phosphate + 2 H(+). It functions in the pathway purine metabolism; AMP biosynthesis via de novo pathway; AMP from IMP: step 1/2. In terms of biological role, plays an important role in the de novo pathway of purine nucleotide biosynthesis. Catalyzes the first committed step in the biosynthesis of AMP from IMP. The protein is Adenylosuccinate synthetase of Corynebacterium aurimucosum (strain ATCC 700975 / DSM 44827 / CIP 107346 / CN-1) (Corynebacterium nigricans).